Consider the following 90-residue polypeptide: Small ribosomal subunit protein bS16 (90 aa).

This sequence belongs to the bacterial ribosomal protein bS16 family.

The chain is Small ribosomal subunit protein bS16 from Streptococcus gordonii (strain Challis / ATCC 35105 / BCRC 15272 / CH1 / DL1 / V288).